Consider the following 92-residue polypeptide: MQITSIAIVFFAAMGAVANPIARESDDLDARDVQLSKFGGECSLKHNTCTYLKGGKNHVVNCGSAANKKCKSDRHHCEYDEHHKRVDCQTPV.

The first 18 residues, 1–18, serve as a signal peptide directing secretion; it reads MQITSIAIVFFAAMGAVA. Residues 19 to 34 constitute a propeptide that is removed on maturation; the sequence is NPIARESDDLDARDVQ. Intrachain disulfides connect Cys42-Cys70, Cys49-Cys77, and Cys62-Cys88.

Its subcellular location is the secreted. It localises to the host cytoplasm. Functionally, antifungal protein that acts as an inhibitor of growth of human pathogenic molds and yeasts. Is active against the model organism Neurospora crassa, the opportunistic human pathogens Aspergillus fumigatus, Trichophyton rubrum, and Aspergillus terreus. Provokes a reduction of the incidence of infections caused by Penicillium digitatum and Penicillium italicum in oranges and by Penicillium expansum in apples. Low doses of pafB have self-inhibition activity. Also shows activity against the model yeast Saccaromyces cerevisiae and the opportunistic human pathogen Candida albicans. No antibacterial activity is observed on the Gram-negative Escherichia coli and the Gram-positive Bacillus subtilis. Finally, also shows anti-viral activity in a model of HCoV 229E infected L132 cells. The sequence is that of Antifungal protein B from Penicillium chrysogenum (Penicillium notatum).